We begin with the raw amino-acid sequence, 601 residues long: Elongation factor 4 (601 aa).

The region spanning 5-188 (SHIRNFAIIA…ALVLRLPPPT (184 aa)) is the tr-type G domain. Residues 17–22 (DHGKST) and 135–138 (NKID) each bind GTP.

This sequence belongs to the TRAFAC class translation factor GTPase superfamily. Classic translation factor GTPase family. LepA subfamily.

It is found in the cell inner membrane. The catalysed reaction is GTP + H2O = GDP + phosphate + H(+). In terms of biological role, required for accurate and efficient protein synthesis under certain stress conditions. May act as a fidelity factor of the translation reaction, by catalyzing a one-codon backward translocation of tRNAs on improperly translocated ribosomes. Back-translocation proceeds from a post-translocation (POST) complex to a pre-translocation (PRE) complex, thus giving elongation factor G a second chance to translocate the tRNAs correctly. Binds to ribosomes in a GTP-dependent manner. This chain is Elongation factor 4, found in Rhodospirillum rubrum (strain ATCC 11170 / ATH 1.1.1 / DSM 467 / LMG 4362 / NCIMB 8255 / S1).